Reading from the N-terminus, the 317-residue chain is Aspartate carbamoyltransferase catalytic subunit (317 aa).

Carbamoyl phosphate-binding residues include Arg-64 and Thr-65. Residue Lys-92 coordinates L-aspartate. Residues Arg-114, His-144, and Gln-147 each coordinate carbamoyl phosphate. Arg-177 and Arg-232 together coordinate L-aspartate. Gly-273 and Pro-274 together coordinate carbamoyl phosphate.

It belongs to the aspartate/ornithine carbamoyltransferase superfamily. ATCase family. As to quaternary structure, heterododecamer (2C3:3R2) of six catalytic PyrB chains organized as two trimers (C3), and six regulatory PyrI chains organized as three dimers (R2).

The enzyme catalyses carbamoyl phosphate + L-aspartate = N-carbamoyl-L-aspartate + phosphate + H(+). The protein operates within pyrimidine metabolism; UMP biosynthesis via de novo pathway; (S)-dihydroorotate from bicarbonate: step 2/3. Its function is as follows. Catalyzes the condensation of carbamoyl phosphate and aspartate to form carbamoyl aspartate and inorganic phosphate, the committed step in the de novo pyrimidine nucleotide biosynthesis pathway. This chain is Aspartate carbamoyltransferase catalytic subunit, found in Thiobacillus denitrificans (strain ATCC 25259 / T1).